The following is a 634-amino-acid chain: Probable sulfate transporter 3.5 (634 aa).

Polar residues predominate over residues 1 to 12; that stretch reads MENTITSSTSSP. The interval 1–25 is disordered; sequence MENTITSSTSSPKGRGVNFSTPRGF. Residues 1–81 are Cytoplasmic-facing; it reads MENTITSSTS…KYDMQKLKYD (81 aa). Residues 82–102 form a helical membrane-spanning segment; sequence VLAGITITSLAVPQGISYAKL. The Extracellular portion of the chain corresponds to 103-104; the sequence is AS. The chain crosses the membrane as a helical span at residues 105–125; it reads IPPIIGLYSSFVPPFVYAVFG. The Cytoplasmic segment spans residues 126 to 130; sequence SSNNL. Residues 131–151 form a helical membrane-spanning segment; sequence AVGTVAACSLLIAETFGEEMI. The Extracellular portion of the chain corresponds to 152 to 158; that stretch reads KNEPELY. Residues 159–179 form a helical membrane-spanning segment; it reads LHLIFTATLITGLFQFAMGFL. The Cytoplasmic segment spans residues 180 to 195; that stretch reads RLGILVDFLSHSTITG. Residues 196–216 traverse the membrane as a helical segment; it reads FMGGTAIIILLQQLKGIFGLV. The Extracellular segment spans residues 217-239; it reads HFTHKTDVVSVLHSILDNRAEWK. A helical transmembrane segment spans residues 240–260; the sequence is WQSTLAGVCFLVFLQSTRYIK. The Cytoplasmic portion of the chain corresponds to 261–265; that stretch reads QRYPK. The helical transmembrane segment at 266–286 threads the bilayer; that stretch reads LFWVSAMGPMVVVVVGCVVAY. Topologically, residues 287–321 are extracellular; sequence LVKGTAHGIATVGPLKKGLNPPSIQLLNFDSKYLG. The helical transmembrane segment at 322-342 threads the bilayer; it reads MVFKAGIVTGLIALAEGIAIG. The Cytoplasmic portion of the chain corresponds to 343–358; that stretch reads RSFAVMKNEQTDGNKE. The chain crosses the membrane as a helical span at residues 359–379; that stretch reads MIAFGLMNVIGSFTSCYLTTG. Topologically, residues 380-395 are extracellular; it reads PFSKTAVNYNAGTKTP. A helical transmembrane segment spans residues 396–416; it reads MSNVVMGVCMMLVLLFLAPLF. Topologically, residues 417 to 420 are cytoplasmic; that stretch reads SYTP. The chain crosses the membrane as a helical span at residues 421–441; the sequence is LVGLSAIIMSAMLGLINYEEM. Topologically, residues 442-458 are extracellular; sequence YHLFKVDKFDFLVCMSA. A helical transmembrane segment spans residues 459-479; that stretch reads FFGVSFLSMDYGLIISVGFSI. At 480-634 the chain is on the cytoplasmic side; sequence VRALLYVARP…FNLTTTKPEV (155 aa). The 116-residue stretch at 508–623 folds into the STAS domain; sequence QYPASEEMLG…LSIDDAVQAC (116 aa).

The protein belongs to the SLC26A/SulP transporter (TC 2.A.53) family.

The protein resides in the membrane. Functionally, h(+)/sulfate cotransporter that may play a role in the regulation of sulfate assimilation. The protein is Probable sulfate transporter 3.5 (SULTR3;5) of Arabidopsis thaliana (Mouse-ear cress).